The primary structure comprises 491 residues: Limb region 1 homolog-like protein (491 aa).

The Extracellular segment spans residues 1-20; the sequence is METEDVTVREQIFHDRVRET. The chain crosses the membrane as a helical span at residues 21–41; sequence IICVLLFICLYILSHFILTHF. Over 42–59 the chain is Cytoplasmic; the sequence is KKSAEFVTDDIEDATVNK. The helical transmembrane segment at 60 to 80 threads the bilayer; sequence IALWLCTFTLSVAVCAVLLLP. At 81-111 the chain is on the extracellular side; it reads ISILSNEVLLTFPHSYYMQWLNGSLIRGLWN. A helical membrane pass occupies residues 112 to 132; that stretch reads LVFLFSNLSLVFLMPFAYFFT. The Cytoplasmic portion of the chain corresponds to 133-152; it reads ESEGFAGSKKGVMARVYETA. A helical membrane pass occupies residues 153 to 173; it reads VMLLLLSLLVLGIVWVASALL. Over 174-192 the chain is Extracellular; sequence HHNTARESLYDLWEYYLPY. The helical transmembrane segment at 193-213 threads the bilayer; that stretch reads LYSGISLFGVLLLLLCTPFGL. Residues 214 to 292 are Cytoplasmic-facing; sequence SRMFSVTGSL…RKRASPWQRN (79 aa). Residues 293 to 313 form a helical membrane-spanning segment; sequence LVYPVAMLLLLALTAVSVLMV. Residues 314-346 lie on the Extracellular side of the membrane; sequence CFHVLELLFDESAMPRGMEDPHLGLASFSMLGS. A helical membrane pass occupies residues 347–367; that stretch reads LGAAVQVVIILYLMVSSVVGF. At 368–384 the chain is on the cytoplasmic side; sequence YSSPLFTGLLPRAQDTT. A helical membrane pass occupies residues 385–405; sequence LTQIIGNCVSLLILSSALPVF. At 406-427 the chain is on the extracellular side; sequence SRTLGITKFDLLGDFGRHDWLG. The chain crosses the membrane as a helical span at residues 428–448; it reads SFHIVFLYNMLFAGLTSACLI. Residues 449–491 lie on the Cytoplasmic side of the membrane; it reads NTVTWALQRELIRAFGLHRLPLTVSRSTIPLKLLLANGLSKIH.

Belongs to the LIMR family. In terms of assembly, dimer. Can also form higher oligomers.

The protein resides in the cell membrane. It is found in the endoplasmic reticulum membrane. May play a role in lymphocyte development by negatively regulating the canonical Wnt signaling pathway. May act as a LCN1 receptor. The polypeptide is Limb region 1 homolog-like protein (lmbr1l) (Danio rerio (Zebrafish)).